The chain runs to 269 residues: Shikimate dehydrogenase (NADP(+)) (269 aa).

Residues 17–19 and threonine 64 each bind shikimate; that span reads SKS. Lysine 68 serves as the catalytic Proton acceptor. Glutamate 80 provides a ligand contact to NADP(+). Residues asparagine 89 and aspartate 105 each coordinate shikimate. Residues 130–134, 154–159, and methionine 213 each bind NADP(+); these read GAGGA and NRTRAK. Shikimate is bound at residue tyrosine 215. Glycine 237 serves as a coordination point for NADP(+).

This sequence belongs to the shikimate dehydrogenase family. In terms of assembly, homodimer.

It carries out the reaction shikimate + NADP(+) = 3-dehydroshikimate + NADPH + H(+). Its pathway is metabolic intermediate biosynthesis; chorismate biosynthesis; chorismate from D-erythrose 4-phosphate and phosphoenolpyruvate: step 4/7. In terms of biological role, involved in the biosynthesis of the chorismate, which leads to the biosynthesis of aromatic amino acids. Catalyzes the reversible NADPH linked reduction of 3-dehydroshikimate (DHSA) to yield shikimate (SA). The chain is Shikimate dehydrogenase (NADP(+)) from Neisseria lactamica.